The primary structure comprises 372 residues: Ephrin type-A receptor 8 (372 aa).

The Protein kinase domain maps to 2–263; sequence IHIEKIIGSG…HVVSVLEALV (262 aa). ATP is bound by residues 8–16 and Lys34; that span reads IGSGESGEV. Residue Asp127 is the Proton acceptor of the active site. A Phosphotyrosine; by autocatalysis modification is found at Tyr206. The SAM domain maps to 297–372; sequence NGDLTVGDWL…SCTQGPRRHL (76 aa). A PDZ-binding motif is present at residues 370–372; sequence RHL.

Heterotetramer upon binding of the ligand. The heterotetramer is composed of an ephrin dimer and a receptor dimer. Oligomerization is probably required to induce biological responses. May also form heterodimers with other ephrin receptors. Interacts with FYN; possible downstream effector of EPHA8 in regulation of cell adhesion. Interacts with PIK3CG; regulates integrin-mediated cell adhesion to substrate. Interacts with TIAM1; regulates clathrin-mediated endocytosis of EPHA8. Interacts with ANKS1A and ANKS1B; EPHA8 kinase activity-independent but stimulated by EPHA8 ubiquitination. Phosphorylated. Phosphorylation is stimulated upon binding of its ligands including EFNA2, EFNA3 and EFNA5. Autophosphorylation on Tyr-206 modulates tyrosine kinase activity. In terms of processing, ubiquitinated. Ubiquitination by CBL regulates the receptor stability and activity through proteasomal degradation. ANKS1A prevents ubiquitination and degradation. Most abundant in brain.

The protein localises to the cell membrane. The protein resides in the cell projection. It is found in the early endosome membrane. The catalysed reaction is L-tyrosyl-[protein] + ATP = O-phospho-L-tyrosyl-[protein] + ADP + H(+). In terms of biological role, receptor tyrosine kinase which binds promiscuously GPI-anchored ephrin-A family ligands residing on adjacent cells, leading to contact-dependent bidirectional signaling into neighboring cells. The signaling pathway downstream of the receptor is referred to as forward signaling while the signaling pathway downstream of the ephrin ligand is referred to as reverse signaling. The GPI-anchored ephrin-A EFNA2, EFNA3, and EFNA5 are able to activate EPHA8 through phosphorylation. With EFNA5 may regulate integrin-mediated cell adhesion and migration on fibronectin substrate but also neurite outgrowth. During development of the nervous system also plays a role in axon guidance. Downstream effectors of the EPHA8 signaling pathway include FYN which promotes cell adhesion upon activation by EPHA8 and the MAP kinases in the stimulation of neurite outgrowth. This is Ephrin type-A receptor 8 (Epha8) from Rattus norvegicus (Rat).